We begin with the raw amino-acid sequence, 210 residues long: Cytochrome c biogenesis ATP-binding export protein CcmA (210 aa).

The region spanning 3–205 (LHLQAAGLAC…KPSGYRELNL (203 aa)) is the ABC transporter domain. 37-44 (GPNGSGKT) provides a ligand contact to ATP.

This sequence belongs to the ABC transporter superfamily. CcmA exporter (TC 3.A.1.107) family. The complex is composed of two ATP-binding proteins (CcmA) and two transmembrane proteins (CcmB).

The protein resides in the cell inner membrane. The enzyme catalyses heme b(in) + ATP + H2O = heme b(out) + ADP + phosphate + H(+). In terms of biological role, part of the ABC transporter complex CcmAB involved in the biogenesis of c-type cytochromes; once thought to export heme, this seems not to be the case, but its exact role is uncertain. Responsible for energy coupling to the transport system. The protein is Cytochrome c biogenesis ATP-binding export protein CcmA of Pseudomonas putida (strain GB-1).